The primary structure comprises 403 residues: Ribosomal RNA large subunit methyltransferase I (403 aa).

A PUA domain is found at 9-88; that stretch reads YPRLVLSKGR…ESIDIAFFTR (80 aa).

The protein belongs to the methyltransferase superfamily. RlmI family.

The protein resides in the cytoplasm. It carries out the reaction cytidine(1962) in 23S rRNA + S-adenosyl-L-methionine = 5-methylcytidine(1962) in 23S rRNA + S-adenosyl-L-homocysteine + H(+). Specifically methylates the cytosine at position 1962 (m5C1962) of 23S rRNA. This Salmonella agona (strain SL483) protein is Ribosomal RNA large subunit methyltransferase I.